A 154-amino-acid chain; its full sequence is Acidic phospholipase A2 2 (154 aa).

Positions 1–19 (MHPAHLLVPLGVCVSLLGA) are cleaved as a signal peptide. Positions 20 to 27 (ARIPPLPL) are excised as a propeptide. 7 disulfides stabilise this stretch: Cys-38/Cys-104, Cys-54/Cys-153, Cys-56/Cys-72, Cys-71/Cys-132, Cys-78/Cys-125, Cys-88/Cys-118, and Cys-111/Cys-123. Tyr-55, Gly-57, and Gly-59 together coordinate Ca(2+). His-75 is an active-site residue. Asp-76 provides a ligand contact to Ca(2+). Asp-126 is an active-site residue.

The protein belongs to the phospholipase A2 family. Group I subfamily. D49 sub-subfamily. As to quaternary structure, monomer. Ca(2+) is required as a cofactor. Expressed by the venom gland.

The protein localises to the secreted. The enzyme catalyses a 1,2-diacyl-sn-glycero-3-phosphocholine + H2O = a 1-acyl-sn-glycero-3-phosphocholine + a fatty acid + H(+). Its function is as follows. Snake venom phospholipase A2 (PLA2) that shows moderate enzymatic activity and exhibits procoagulant activity. PLA2 catalyzes the calcium-dependent hydrolysis of the 2-acyl groups in 3-sn-phosphoglycerides. The protein is Acidic phospholipase A2 2 of Pseudonaja textilis (Eastern brown snake).